We begin with the raw amino-acid sequence, 251 residues long: Malonyl-[acyl-carrier protein] O-methyltransferase (251 aa).

It belongs to the methyltransferase superfamily.

The enzyme catalyses malonyl-[ACP] + S-adenosyl-L-methionine = malonyl-[ACP] methyl ester + S-adenosyl-L-homocysteine. The protein operates within cofactor biosynthesis; biotin biosynthesis. Converts the free carboxyl group of a malonyl-thioester to its methyl ester by transfer of a methyl group from S-adenosyl-L-methionine (SAM). It allows to synthesize pimeloyl-ACP via the fatty acid synthetic pathway. This Enterobacter lignolyticus (strain SCF1) protein is Malonyl-[acyl-carrier protein] O-methyltransferase.